The chain runs to 693 residues: Homoaconitase, mitochondrial (693 aa).

Residues 1–17 (MFRVQRLRMFSTSRALY) constitute a mitochondrion transit peptide. Positions 338, 405, and 408 each coordinate [4Fe-4S] cluster.

It belongs to the aconitase/IPM isomerase family. It depends on [4Fe-4S] cluster as a cofactor.

The protein localises to the mitochondrion. The catalysed reaction is (2R,3S)-homoisocitrate = cis-homoaconitate + H2O. It functions in the pathway amino-acid biosynthesis; L-lysine biosynthesis via AAA pathway; L-alpha-aminoadipate from 2-oxoglutarate: step 3/5. In terms of biological role, catalyzes the reversible hydration of cis-homoaconitate to (2R,3S)-homoisocitrate, a step in the alpha-aminoadipate pathway for lysine biosynthesis. This chain is Homoaconitase, mitochondrial (LYS4), found in Kluyveromyces lactis (strain ATCC 8585 / CBS 2359 / DSM 70799 / NBRC 1267 / NRRL Y-1140 / WM37) (Yeast).